We begin with the raw amino-acid sequence, 210 residues long: THAP domain-containing protein 1 (210 aa).

A THAP-type zinc finger spans residues C5–H57. An HCFC1-binding motif (HBM) motif is present at residues D131–Y134. A coiled-coil region spans residues E137–K187.

The protein belongs to the THAP1 family. As to quaternary structure, interacts with PAWR. Component of a THAP1/THAP3-HCFC1-OGT complex that contains, either THAP1 or THAP3, HCFC1 and OGT. Interacts with OGT. Interacts (via the HBM) with HCFC1 (via the Kelch-repeat domain); the interaction recruits HCFC1 to the RRM1 promoter. As to expression, highest levels in heart, liver and kidney. Lower levels in brain and lung.

The protein localises to the nucleus. Its subcellular location is the nucleoplasm. The protein resides in the PML body. Functionally, DNA-binding transcription regulator that regulates endothelial cell proliferation and G1/S cell-cycle progression. Specifically binds the 5'-[AT]NTNN[GT]GGCA[AGT]-3' core DNA sequence and acts by modulating expression of pRB-E2F cell-cycle target genes, including RRM1. Component of a THAP1/THAP3-HCFC1-OGT complex that is required for the regulation of the transcriptional activity of RRM1. May also have pro-apoptotic activity by potentiating both serum-withdrawal and TNF-induced apoptosis. This is THAP domain-containing protein 1 (Thap1) from Mus musculus (Mouse).